The primary structure comprises 448 residues: uncharacterized protein (448 aa).

Residues 428–440 are compositionally biased toward polar residues; the sequence is PFKTDCDPNNDND. The interval 428–448 is disordered; it reads PFKTDCDPNNDNDLTPPAVFG.

This is an uncharacterized protein from Mycoplasma pneumoniae (strain ATCC 29342 / M129 / Subtype 1) (Mycoplasmoides pneumoniae).